Here is a 54-residue protein sequence, read N- to C-terminus: UPF0391 membrane protein Bpro_0879 (54 aa).

2 helical membrane-spanning segments follow: residues Val6–Gly26 and Ile30–Leu50.

Belongs to the UPF0391 family.

The protein resides in the cell membrane. The chain is UPF0391 membrane protein Bpro_0879 from Polaromonas sp. (strain JS666 / ATCC BAA-500).